We begin with the raw amino-acid sequence, 422 residues long: Tyrosine--tRNA ligase (422 aa).

An L-tyrosine-binding site is contributed by Tyr36. The 'HIGH' region signature appears at 41 to 50 (PTADSLHIGH). The L-tyrosine site is built by Tyr175 and Gln179. The 'KMSKS' region motif lies at 235 to 239 (KFGKT). ATP is bound at residue Lys238. The S4 RNA-binding domain maps to 354–411 (TSLQEALTKSKLATSRSQARYFIKSNAITINAHKQSKIEYIFQDSDRIYNLYTLLKRG).

This sequence belongs to the class-I aminoacyl-tRNA synthetase family. TyrS type 1 subfamily. In terms of assembly, homodimer.

It is found in the cytoplasm. It carries out the reaction tRNA(Tyr) + L-tyrosine + ATP = L-tyrosyl-tRNA(Tyr) + AMP + diphosphate + H(+). Its function is as follows. Catalyzes the attachment of tyrosine to tRNA(Tyr) in a two-step reaction: tyrosine is first activated by ATP to form Tyr-AMP and then transferred to the acceptor end of tRNA(Tyr). The protein is Tyrosine--tRNA ligase of Blochmanniella floridana.